The primary structure comprises 265 residues: Glutamate racemase (265 aa).

Substrate is bound by residues 9–10 (DS) and 41–42 (YS). The active-site Proton donor/acceptor is C73. A substrate-binding site is contributed by 74–75 (NT). C184 (proton donor/acceptor) is an active-site residue. A substrate-binding site is contributed by 185–186 (TH).

Belongs to the aspartate/glutamate racemases family.

The enzyme catalyses L-glutamate = D-glutamate. It functions in the pathway cell wall biogenesis; peptidoglycan biosynthesis. In terms of biological role, provides the (R)-glutamate required for cell wall biosynthesis. The protein is Glutamate racemase of Actinobacillus pleuropneumoniae serotype 3 (strain JL03).